Reading from the N-terminus, the 566-residue chain is Cyclin-dependent kinase-like 2 (566 aa).

The Protein kinase domain maps to 4–287 (YENLGLVGEG…CAELLHHDFF (284 aa)). ATP is bound by residues 10-18 (VGEGSYGMV) and lysine 33. The [NKR]KIAxRE motif lies at 45–51 (KKIAMRE). Aspartate 126 acts as the Proton acceptor in catalysis. Disordered regions lie at residues 307–334 (DARNISLSKKSQNRKKEKEKDDSLGEER) and 545–566 (QVSGSPLSDGSEADSPWMEHQH). The span at 320-334 (RKKEKEKDDSLGEER) shows a compositional bias: basic and acidic residues.

The protein belongs to the protein kinase superfamily. CMGC Ser/Thr protein kinase family. CDC2/CDKX subfamily.

It is found in the cytoplasm. The protein resides in the nucleus. The catalysed reaction is L-seryl-[protein] + ATP = O-phospho-L-seryl-[protein] + ADP + H(+). It carries out the reaction L-threonyl-[protein] + ATP = O-phospho-L-threonyl-[protein] + ADP + H(+). The polypeptide is Cyclin-dependent kinase-like 2 (Oryctolagus cuniculus (Rabbit)).